The following is a 372-amino-acid chain: F-box/kelch-repeat protein At5g49000 (372 aa).

Basic residues predominate over residues 1-11 (MSSPERKRKKR). Positions 1-24 (MSSPERKRKKRSLEPSPESTPNPS) are disordered. One can recognise an F-box domain in the interval 19 to 65 (STPNPSLPDDLIVSILARVSRLYYPILSLVSKSSRTLVTSPELYKTR). 4 Kelch repeats span residues 131-177 (NIYA…VVDG), 179-224 (IYVA…VIEG), 226-271 (IYIF…LYCY), and 273-312 (PGGI…GGKM).

The protein is F-box/kelch-repeat protein At5g49000 of Arabidopsis thaliana (Mouse-ear cress).